A 248-amino-acid chain; its full sequence is Triosephosphate isomerase A (248 aa).

Substrate contacts are provided by N11 and K13. H95 functions as the Electrophile in the catalytic mechanism. E165 serves as the catalytic Proton acceptor.

The protein belongs to the triosephosphate isomerase family. Homodimer.

The protein localises to the cytoplasm. It catalyses the reaction dihydroxyacetone phosphate = methylglyoxal + phosphate. The catalysed reaction is D-glyceraldehyde 3-phosphate = dihydroxyacetone phosphate. The protein operates within carbohydrate degradation; glycolysis; D-glyceraldehyde 3-phosphate from glycerone phosphate: step 1/1. It functions in the pathway carbohydrate biosynthesis; gluconeogenesis. Triosephosphate isomerase is an extremely efficient metabolic enzyme that catalyzes the interconversion between dihydroxyacetone phosphate (DHAP) and D-glyceraldehyde-3-phosphate (G3P) in glycolysis and gluconeogenesis. Its function is as follows. It is also responsible for the non-negligible production of methylglyoxal a reactive cytotoxic side-product that modifies and can alter proteins, DNA and lipids. In Danio rerio (Zebrafish), this protein is Triosephosphate isomerase A (tpi1a).